The primary structure comprises 220 residues: Type IV major pilin protein PilA (220 aa).

A propeptide spans 1–12 (leader sequence); the sequence is MRVSRFNPRNRG. F13 carries the N-methylphenylalanine modification. Residues 13 to 33 form a helical membrane-spanning segment; it reads FTLIELMIVVAIIGILAAIAI.

It belongs to the N-Me-Phe pilin family.

It localises to the fimbrium. Its subcellular location is the membrane. Its activity is regulated as follows. The two-component PilS2/PilR2 is required for proper assembly of T4P and regulation. Major component of the type IV pili that are required for social gliding motility through cycles of extension and retraction. Extended pili are composed of thousands of copies of PilA and retract upon binding to extracellular polysaccharides and thereby pull the cell forward. The sequence is that of Type IV major pilin protein PilA (pilA) from Myxococcus xanthus (strain DK1622).